A 296-amino-acid polypeptide reads, in one-letter code: uncharacterized protein (296 aa).

Residues 1–95 (MYKIVSKKEL…VGPLGVPSEF (95 aa)) form the FAD-binding FR-type domain.

This is an uncharacterized protein from Clostridium beijerinckii (Clostridium MP).